A 323-amino-acid polypeptide reads, in one-letter code: Apolipoprotein E (323 aa).

The first 18 residues, 1–18, serve as a signal peptide directing secretion; it reads MKVLWAALVVTLLAGCWA. Tandem repeats lie at residues 86–107, 108–129, 130–151, 152–173, 174–195, 196–217, 218–239, and 240–261. The interval 86–261 is 8 X 22 AA approximate tandem repeats; sequence ALMDETMKEV…HLEEMREQIQ (176 aa). Met-149 carries the post-translational modification Methionine sulfoxide. Ser-153 carries the phosphoserine modification. The segment at 164–174 is LDL and other lipoprotein receptors binding; the sequence is HMRKLRKRVLR. 168–171 is a heparin binding site; it reads LRKR. Residues 216 to 296 form a lipid-binding and lipoprotein association region; that stretch reads NAKVGALATQ…SWFEPLLEDM (81 aa). 235 to 242 contributes to the heparin binding site; it reads GQQLRGQL. Residues 272 to 323 form a homooligomerization region; it reads DQIRQKAEAFQARLKSWFEPLLEDMQRQWDGLVEKVQAAVATIPTSKPVEEP. The specificity for association with VLDL stretch occupies residues 284–296; sequence RLKSWFEPLLEDM.

It belongs to the apolipoprotein A1/A4/E family. Homotetramer. May interact with ABCA1; functionally associated with ABCA1 in the biogenesis of HDLs. May interact with APP/A4 amyloid-beta peptide; the interaction is extremely stable in vitro but its physiological significance is unclear. May interact with MAPT. May interact with MAP2. In the cerebrospinal fluid, interacts with secreted SORL1. Interacts with PMEL; this allows the loading of PMEL luminal fragment on ILVs to induce fibril nucleation. Post-translationally, APOE exists as multiple glycosylated and sialylated glycoforms within cells and in plasma. The extent of glycosylation and sialylation are tissue and context specific. In terms of processing, glycated in plasma VLDL. Phosphorylated by FAM20C in the extracellular medium.

The protein resides in the secreted. It localises to the extracellular space. The protein localises to the extracellular matrix. It is found in the extracellular vesicle. Its subcellular location is the endosome. The protein resides in the multivesicular body. In terms of biological role, APOE is an apolipoprotein, a protein associating with lipid particles, that mainly functions in lipoprotein-mediated lipid transport between organs via the plasma and interstitial fluids. APOE is a core component of plasma lipoproteins and is involved in their production, conversion and clearance. Apolipoproteins are amphipathic molecules that interact both with lipids of the lipoprotein particle core and the aqueous environment of the plasma. As such, APOE associates with chylomicrons, chylomicron remnants, very low density lipoproteins (VLDL) and intermediate density lipoproteins (IDL) but shows a preferential binding to high-density lipoproteins (HDL). It also binds a wide range of cellular receptors including the LDL receptor/LDLR and the very low-density lipoprotein receptor/VLDLR that mediate the cellular uptake of the APOE-containing lipoprotein particles. Finally, APOE also has a heparin-binding activity and binds heparan-sulfate proteoglycans on the surface of cells, a property that supports the capture and the receptor-mediated uptake of APOE-containing lipoproteins by cells. The chain is Apolipoprotein E (APOE) from Canis lupus familiaris (Dog).